A 457-amino-acid chain; its full sequence is Streptogrisin-C (457 aa).

The tat-type signal signal peptide spans 1–34 (MERTTLRRRALVAGTATVAVGALALAGLTGVASA). A propeptide spanning residues 35 to 202 (DPAATAAPPV…ARSAEQPRAL (168 aa)) is cleaved from the precursor. The tract at residues 203-393 (ADIRGGDAYY…QAYGLTLVTS (191 aa)) is catalytic. A disulfide bridge links cysteine 219 with cysteine 239. Catalysis depends on charge relay system residues histidine 238 and aspartate 266. 2 cysteine pairs are disulfide-bonded: cysteine 305–cysteine 315 and cysteine 341–cysteine 368. Serine 347 functions as the Charge relay system in the catalytic mechanism. Positions 393–412 (SGGGTPTDPPTTPPTDSPGG) are disordered. The linker stretch occupies residues 394-413 (GGGTPTDPPTTPPTDSPGGT). The span at 399 to 408 (TDPPTTPPTD) shows a compositional bias: pro residues. Residues 415–457 (AVGTAYAAGATVTYGGATYRCLQAHTAQPGWTPADVPALWQRV) enclose the Chitin-binding type-3 domain.

Belongs to the peptidase S1 family. As to quaternary structure, monomer. Post-translationally, predicted to be exported by the Tat system. The position of the signal peptide cleavage has not been experimentally proven.

Its function is as follows. Hydrolysis of proteins with specificity similar to chymotrypsin. May be specialized for the degradation of chitin-linked proteins. Has a primary specificity for large aliphatic or aromatic amino acids. This Streptomyces griseus protein is Streptogrisin-C (sprC).